The chain runs to 101 residues: Small ribosomal subunit protein uS14 (101 aa).

Residues 32-67 (SDAKRSDEEREAARLGLQKLPRNANPTRQRNRCEIT) are disordered. The segment covering 33–44 (DAKRSDEEREAA) has biased composition (basic and acidic residues).

The protein belongs to the universal ribosomal protein uS14 family. As to quaternary structure, part of the 30S ribosomal subunit. Contacts proteins S3 and S10.

Its function is as follows. Binds 16S rRNA, required for the assembly of 30S particles and may also be responsible for determining the conformation of the 16S rRNA at the A site. This chain is Small ribosomal subunit protein uS14, found in Paracidovorax citrulli (strain AAC00-1) (Acidovorax citrulli).